The primary structure comprises 444 residues: Guanosine nucleotide diphosphate dissociation inhibitor 2 (444 aa).

It belongs to the Rab GDI family. In terms of tissue distribution, expressed in roots and floral buds.

In terms of biological role, regulates the GDP/GTP exchange reaction of most RAB proteins by inhibiting the dissociation of GDP from them, and the subsequent binding of GTP. In Arabidopsis thaliana (Mouse-ear cress), this protein is Guanosine nucleotide diphosphate dissociation inhibitor 2 (GDI2).